The sequence spans 642 residues: 1-deoxy-D-xylulose-5-phosphate synthase 2 (642 aa).

Thiamine diphosphate is bound by residues histidine 73 and 113–115; that span reads SHA. Aspartate 144 lines the Mg(2+) pocket. Thiamine diphosphate contacts are provided by residues 145–146, asparagine 174, tyrosine 285, and glutamate 366; that span reads GA. Asparagine 174 provides a ligand contact to Mg(2+).

Belongs to the transketolase family. DXPS subfamily. Homodimer. The cofactor is Mg(2+). Requires thiamine diphosphate as cofactor.

It carries out the reaction D-glyceraldehyde 3-phosphate + pyruvate + H(+) = 1-deoxy-D-xylulose 5-phosphate + CO2. It functions in the pathway metabolic intermediate biosynthesis; 1-deoxy-D-xylulose 5-phosphate biosynthesis; 1-deoxy-D-xylulose 5-phosphate from D-glyceraldehyde 3-phosphate and pyruvate: step 1/1. In terms of biological role, catalyzes the acyloin condensation reaction between C atoms 2 and 3 of pyruvate and glyceraldehyde 3-phosphate to yield 1-deoxy-D-xylulose-5-phosphate (DXP). This chain is 1-deoxy-D-xylulose-5-phosphate synthase 2, found in Streptomyces avermitilis (strain ATCC 31267 / DSM 46492 / JCM 5070 / NBRC 14893 / NCIMB 12804 / NRRL 8165 / MA-4680).